The sequence spans 334 residues: Thioredoxin reductase (334 aa).

Residues 10 to 13, 39 to 40, Gln44, Asn53, Val86, Cys143, Asp287, and 294 to 296 contribute to the FAD site; these read SGPA, IA, and RQA. Cys140 and Cys143 are disulfide-bonded.

It belongs to the class-II pyridine nucleotide-disulfide oxidoreductase family. Homodimer. FAD serves as cofactor.

Its subcellular location is the cytoplasm. It carries out the reaction [thioredoxin]-dithiol + NADP(+) = [thioredoxin]-disulfide + NADPH + H(+). This is Thioredoxin reductase (cys-9) from Neurospora crassa (strain ATCC 24698 / 74-OR23-1A / CBS 708.71 / DSM 1257 / FGSC 987).